We begin with the raw amino-acid sequence, 500 residues long: L-arabinose isomerase (500 aa).

Mn(2+)-binding residues include Glu306, Glu333, His349, and His448.

Belongs to the arabinose isomerase family. Requires Mn(2+) as cofactor.

The catalysed reaction is beta-L-arabinopyranose = L-ribulose. Its pathway is carbohydrate degradation; L-arabinose degradation via L-ribulose; D-xylulose 5-phosphate from L-arabinose (bacterial route): step 1/3. In terms of biological role, catalyzes the conversion of L-arabinose to L-ribulose. The chain is L-arabinose isomerase from Koribacter versatilis (strain Ellin345).